A 395-amino-acid chain; its full sequence is GPI-anchor transamidase (395 aa).

Residues 1–27 form the signal peptide; that stretch reads MAAPCFLTLRVATLAALALLSLGSSAA. Residues 28 to 368 lie on the Lumenal side of the membrane; it reads GHIEDQAEQF…PKPRDWHPPG (341 aa). D79, I82, E118, and D120 together coordinate Ca(2+). The active-site Proton donor is H164. C206 functions as the Nucleophile; acyl-thioester intermediate in the catalytic mechanism. Residues C206, S232, and S234 each contribute to the a protein site. The autoinhibitory loop stretch occupies residues 231–236; the sequence is DSLSHQ. A disulfide bridge links C275 with C280. A helical transmembrane segment spans residues 369 to 385; that stretch reads GFILGLWALIIMVFFKT. The Cytoplasmic segment spans residues 386 to 395; that stretch reads YGIKHMKFIF.

This sequence belongs to the peptidase C13 family. Heteropentamer. Part of the GPI-anchor transamidase complex, consisting of PIGK, PIGT, PIGS, PIGU and GAA1. Interacts with GPAA1. Interacts with PIGT; this interaction, via a disulfide link, stabilizes the expression of GAA1 and PIGK and links them to PIGS. Post-translationally, the disulfide bond between PIGK/GPI8 and PIGT is important for normal enzyme activity.

Its subcellular location is the endoplasmic reticulum membrane. Its pathway is glycolipid biosynthesis; glycosylphosphatidylinositol-anchor biosynthesis. In the absence of proproteins substrates, exists in an inactive state with a disrupted catalytic site by an autoinhibitory loop. The binding of proprotein substrates, particularly the CSP region, to GPI-T triggers concerted conformational changes that alleviate the inhibition by the autoinhibitory loop. Meanwhile, proprotein residues near the omega- site induce the formation of a catalytic cleft for catalysis, following which the products are released and GPI-T reverts to the inactive state. Catalytic subunit of the glycosylphosphatidylinositol-anchor (GPI-anchor) transamidase (GPI-T) complex that catalyzes the formation of the linkage between a proprotein and a GPI-anchor and participates in GPI anchored protein biosynthesis. Recognizes diverse proproteins at a C-terminal signal peptide (CSP) region that lacks consensus sequence and replaces it with a GPI-anchor via a transamidation reaction. Transamidation catalysis reaction follows a two-phase mechanism. In the acyl-enzyme phase, the carbonyl group of the proproteins's omega-site undergoes a nucleophilic attack forming an enzyme-substrate thioester bond. Followed by a general acid catalysis that allows CSP releasing, regenerating the carbonyl, and forming the acyl-enzyme intermediate. In the GPI-anchor attachment phase, the amino group of the GPI-anchor's ethanolamine phosphate, the one on third mannose (EtNP3), mediates a nucleophilic attack on the carbonyl of the acyl-enzyme intermediate, replacing the CSP, allowing GPI-anchor attachment to the omega-residue, therefore forming the product and freeing the enzyme. This Mus musculus (Mouse) protein is GPI-anchor transamidase.